The sequence spans 300 residues: Ribosomal protein L11 methyltransferase (300 aa).

S-adenosyl-L-methionine is bound by residues Thr152, Gly173, Asp195, and Asn234.

This sequence belongs to the methyltransferase superfamily. PrmA family.

The protein resides in the cytoplasm. It catalyses the reaction L-lysyl-[protein] + 3 S-adenosyl-L-methionine = N(6),N(6),N(6)-trimethyl-L-lysyl-[protein] + 3 S-adenosyl-L-homocysteine + 3 H(+). Functionally, methylates ribosomal protein L11. The protein is Ribosomal protein L11 methyltransferase of Burkholderia pseudomallei (strain K96243).